A 246-amino-acid polypeptide reads, in one-letter code: Ribonuclease PH (246 aa).

Residues arginine 91 and 129–131 (GTR) contribute to the phosphate site.

It belongs to the RNase PH family. As to quaternary structure, homohexameric ring arranged as a trimer of dimers.

It catalyses the reaction tRNA(n+1) + phosphate = tRNA(n) + a ribonucleoside 5'-diphosphate. In terms of biological role, phosphorolytic 3'-5' exoribonuclease that plays an important role in tRNA 3'-end maturation. Removes nucleotide residues following the 3'-CCA terminus of tRNAs; can also add nucleotides to the ends of RNA molecules by using nucleoside diphosphates as substrates, but this may not be physiologically important. Probably plays a role in initiation of 16S rRNA degradation (leading to ribosome degradation) during starvation. The chain is Ribonuclease PH from Paraburkholderia phymatum (strain DSM 17167 / CIP 108236 / LMG 21445 / STM815) (Burkholderia phymatum).